Consider the following 995-residue polypeptide: MSEQERIQDCLRKEIRSLLISTKDGLTPQQLEKEYLLMVGNHLPLRILGYRSTMELVLDMPDVVSVCPCGDGTVILKAIPDESTKGIASLVAKQRRSHKVRNSMQKGRSSVCSGRVPYRGRVPPILPAVVKSELKDLLALSPVLLSDFEKAFARRFGRSFQYMQYGFLSMFEVLSAASDVICVEQTRAGSLLTLKKSASEEKQREWPAGKIFTQPFRMKQQGSYSTGFPVTKTRFSQPISNMEPPKQVLSMEKIPMFNTVEASRLSHTEKLNQLESTFKSVIAQIGPGGTVDPDLKHKIKFVVSKFPQGLFISKLLGEFELVFKEQLSPKQLGFLNVTELVGALSDILRVEFSEEKQDLLVFDADLRPLLPAGPLSSVRNSCLVQPDKRIEANAWASSPSRNSLSTVAVKKTTWDCPLKNHKEAEQKAYKKPNLVVKPLQLQVETNKSQLSLSMANHDIPPDAVRAKKLCRLPPLDTSTLVGVFVEYIISPSQFYVRIYSRDSSELLEDMMIEMRRCYSNQLVSDRYVMPEYFIQPGHLCCVRISEDKWWYRVIIHRILGKKEVEVFYPDFGNIGTVQKSSLRFLKCCYTKLPAQAIPCSLAWVRPAEEHWTSKAILHFQKLCGLKPLVGVVDEYIDGILNIFLCDTSSNEDVYFHHVLRTEGHAIVCRENAPSKGFRDFNPPALYTNSSAAPGDMVLTELGHPAQQHYLNEDGEILQQPQQDINDEKSISHLKSVSEELLKDSKLGPLKTRESCEEEPQWSILKPKDPKEENEDEVPTGMPCLESVTIGDDIWDENWLPLQAKMGKAGGPASHLFTSSLVGKKQYQTRGETTRKDWCFSTSKDIWDDSWQPLGLANDVKGRTHTPEGPIAQEKNIGTTRIRKQPDLQYPLDSSTLPKLEEFYISLIKSQQSAEGSQSEPASIQTPLKPGQASSTAPSSTPAAGDSPENHSGSAPDFSEALHSSKYSHGCLGSSCAVSHVQEPPALVPQCERREA.

HTH OST-type domains lie at 7–80 (IQDC…KAIP), 122–197 (VPPI…LKKS), and 291–365 (VDPD…FDAD). One can recognise a Tudor domain in the interval 533–592 (FIQPGHLCCVRISEDKWWYRVIIHRILGKKEVEVFYPDFGNIGTVQKSSLRFLKCCYTKL). Disordered regions lie at residues 747–781 (GPLK…PTGM), 857–892 (NDVK…YPLD), and 911–960 (QSAE…FSEA). The span at 911 to 925 (QSAEGSQSEPASIQT) shows a compositional bias: polar residues. Residues 932–943 (ASSTAPSSTPAA) are compositionally biased toward low complexity. A Phosphoserine modification is found at Ser946.

This sequence belongs to the TDRD5 family.

The protein resides in the cytoplasm. Required during spermiogenesis to participate in the repression transposable elements and prevent their mobilization, which is essential for the germline integrity. Probably acts via the piRNA metabolic process, which mediates the repression of transposable elements during meiosis by forming complexes composed of piRNAs and Piwi proteins and govern the methylation and subsequent repression of transposons. Required for chromatoid body (CB) assembly. The polypeptide is Tudor domain-containing protein 5 (Tdrd5) (Rattus norvegicus (Rat)).